The sequence spans 255 residues: NAD kinase (255 aa).

Residue Asp-44 is the Proton acceptor of the active site. Residues 44–45, His-49, 114–115, Asp-144, Ala-152, 155–160, and Gln-216 contribute to the NAD(+) site; these read DG, NE, and SAYNLS.

The protein belongs to the NAD kinase family. A divalent metal cation is required as a cofactor.

Its subcellular location is the cytoplasm. It carries out the reaction NAD(+) + ATP = ADP + NADP(+) + H(+). In terms of biological role, involved in the regulation of the intracellular balance of NAD and NADP, and is a key enzyme in the biosynthesis of NADP. Catalyzes specifically the phosphorylation on 2'-hydroxyl of the adenosine moiety of NAD to yield NADP. This is NAD kinase from Rickettsia conorii (strain ATCC VR-613 / Malish 7).